The sequence spans 174 residues: Putative NADH dehydrogenase/NAD(P)H nitroreductase AF_2267 (174 aa).

107–112 serves as a coordination point for NAD(+); it reads AARCLG.

Belongs to the nitroreductase family. It depends on FMN as a cofactor.

This is Putative NADH dehydrogenase/NAD(P)H nitroreductase AF_2267 from Archaeoglobus fulgidus (strain ATCC 49558 / DSM 4304 / JCM 9628 / NBRC 100126 / VC-16).